Reading from the N-terminus, the 230-residue chain is Zein-alpha 19A2 (230 aa).

The signal sequence occupies residues 1 to 18 (KIFCFLMLLGLSASAATA).

It belongs to the zein family.

In terms of biological role, zeins are major seed storage proteins. This is Zein-alpha 19A2 from Zea mays (Maize).